Consider the following 366-residue polypeptide: Glutamate 5-kinase (366 aa).

Lys17 contributes to the ATP binding site. Substrate is bound by residues Ser57, Asp144, and Asn156. Residues 176 to 177 and 216 to 222 each bind ATP; these read SD and TGGMASK. Positions 278–352 constitute a PUA domain; sequence QGILHIDEGA…GKSTQELPAE (75 aa).

Belongs to the glutamate 5-kinase family.

Its subcellular location is the cytoplasm. The enzyme catalyses L-glutamate + ATP = L-glutamyl 5-phosphate + ADP. Its pathway is amino-acid biosynthesis; L-proline biosynthesis; L-glutamate 5-semialdehyde from L-glutamate: step 1/2. In terms of biological role, catalyzes the transfer of a phosphate group to glutamate to form L-glutamate 5-phosphate. This chain is Glutamate 5-kinase, found in Rhodococcus jostii (strain RHA1).